Reading from the N-terminus, the 452-residue chain is Bifunctional protein GlmU (452 aa).

The interval 1–232 is pyrophosphorylase; that stretch reads MTARNSLTIV…EDEVRGINTK (232 aa). UDP-N-acetyl-alpha-D-glucosamine is bound by residues 11 to 14, Lys25, Gln78, and 83 to 84; these read LAAG and GT. Asp108 is a Mg(2+) binding site. UDP-N-acetyl-alpha-D-glucosamine contacts are provided by Gly144, Glu158, Asn173, and Asn230. Asn230 contacts Mg(2+). The interval 233-253 is linker; it reads AQLAEAETVMQTRLRLAAMAA. An N-acetyltransferase region spans residues 254 to 452; that stretch reads GVTLIAPETV…KSRHRKPKAH (199 aa). Arg319 and Lys337 together coordinate UDP-N-acetyl-alpha-D-glucosamine. The active-site Proton acceptor is the His349. UDP-N-acetyl-alpha-D-glucosamine contacts are provided by Tyr352 and Asn363. Residues Ala366, 372 to 373, Ser391, Ser409, and Arg426 contribute to the acetyl-CoA site; that span reads NY.

The protein in the N-terminal section; belongs to the N-acetylglucosamine-1-phosphate uridyltransferase family. This sequence in the C-terminal section; belongs to the transferase hexapeptide repeat family. In terms of assembly, homotrimer. The cofactor is Mg(2+).

Its subcellular location is the cytoplasm. It carries out the reaction alpha-D-glucosamine 1-phosphate + acetyl-CoA = N-acetyl-alpha-D-glucosamine 1-phosphate + CoA + H(+). The catalysed reaction is N-acetyl-alpha-D-glucosamine 1-phosphate + UTP + H(+) = UDP-N-acetyl-alpha-D-glucosamine + diphosphate. It functions in the pathway nucleotide-sugar biosynthesis; UDP-N-acetyl-alpha-D-glucosamine biosynthesis; N-acetyl-alpha-D-glucosamine 1-phosphate from alpha-D-glucosamine 6-phosphate (route II): step 2/2. Its pathway is nucleotide-sugar biosynthesis; UDP-N-acetyl-alpha-D-glucosamine biosynthesis; UDP-N-acetyl-alpha-D-glucosamine from N-acetyl-alpha-D-glucosamine 1-phosphate: step 1/1. The protein operates within bacterial outer membrane biogenesis; LPS lipid A biosynthesis. In terms of biological role, catalyzes the last two sequential reactions in the de novo biosynthetic pathway for UDP-N-acetylglucosamine (UDP-GlcNAc). The C-terminal domain catalyzes the transfer of acetyl group from acetyl coenzyme A to glucosamine-1-phosphate (GlcN-1-P) to produce N-acetylglucosamine-1-phosphate (GlcNAc-1-P), which is converted into UDP-GlcNAc by the transfer of uridine 5-monophosphate (from uridine 5-triphosphate), a reaction catalyzed by the N-terminal domain. This Rhodopseudomonas palustris (strain ATCC BAA-98 / CGA009) protein is Bifunctional protein GlmU.